The chain runs to 575 residues: MSAQGEGGGAGGSGGGGAGSDGGGNAGQSSTGSGTVAVTNGGNSSAKNQLPLTPRFTAEEKEVLYTLFHLHEEVIDIKHRKKQRNKYSVRETWDKIVKDFNSHPHVSAMRNIKQIQKFWLNSRLRKQYPYRDGSSSNLSSGSAKISSVSVSVASAVPQQQQQQHHQQHDSVKVEPEYQISPDASEHNPQADTFDEIEMDANDVSEIDEDPMEQQQQQQQEAQAQAQAQAQAQAQVQSAAAEMQKMQQVNAVAAAAAANATMINTHQINVDQISAEKLTLNDLLHFKTARPREEIILIKHPEATATQIHTIPTQAQQHPMATITAGGYNQQIISEIKPQQITLAQYQAQQQQQAQAQAQAQAQAQAQAQAQAQAQAQAQQLAQQQLAAAQHQQLAAAVQVHHQQQQQQQAAVAVQQQQAAAAAAVKMQLTAATPTFTFSALPTVTAATTVPAAVPVPVATASSGSANSVAVNTSTASSVSINNTSLGGGGGNGATNSSATAADSFEERMNYFKIREAELRCKEQQLATEAKRIELNKAQDELKYMKEVHRLRVEELTMKIRILQKEEEQLRKCSTS.

Residues 1 to 26 are compositionally biased toward gly residues; it reads MSAQGEGGGAGGSGGGGAGSDGGGNA. Disordered regions lie at residues 1–53 and 151–174; these read MSAQ…LPLT and SVAS…VKVE. Positions 2–47 are hydrophobic; sequence SAQGEGGGAGGSGGGGAGSDGGGNAGQSSTGSGTVAVTNGGNSSAK. Over residues 31–51 the composition is skewed to polar residues; the sequence is TGSGTVAVTNGGNSSAKNQLP. Residues 48–128 mediate DNA binding; the sequence is NQLPLTPRFT…WLNSRLRKQY (81 aa). Residues 151-164 show a composition bias toward low complexity; that stretch reads SVASAVPQQQQQQH.

As to quaternary structure, self-associates forming complexes of several hundred monomers.

The protein localises to the nucleus. Functionally, involved in transvection phenomena (= synapsis-dependent gene expression), where the synaptic pairing of chromosomes carrying genes with which zeste interacts influences the expression of these genes. Zeste binds to DNA and stimulates transcription from a nearby promoter. This is Regulatory protein zeste (z) from Drosophila melanogaster (Fruit fly).